The primary structure comprises 555 residues: MANPLLYSPINPQFFQPLLPGFTNHLDIPVAFFLKYLVGTNVGKTAELRSDASEMTWKVKIDGRRLSNGWEDFTIAHDLRVGDIVVFRQEGELVFHVTALGPSCCEIQYGEDTLEEDKIEKLCGTENVSSKKKSLKREAESAPDNSLDSCFVATVTGSNLKRDTLYIPKEFALSNGLMNKYQIVLMNEEGESWKIDLRREAYNYGRFYMRRGWRSFCIANGKKPGDVFAFKLVKNEETPMIQLFPMTIEDLDKLQSLPRHKIRKTEAAPSSPDLSSFVATVTASNLSRDRLYLPKTFIMSNGLLKKFQMCLMNEEGESWTIDVKHEAHTGRFLTIRGWRRFCVANGKKPGDLLKFKLVHNEETPVLQLLPLNSEDLHKLNPSNDTRHGQSLKVTKKEFLGMEATENEFLGEEVYCNDSFKASEKDTLPFAEPINEDIRQGQCSQTIKQEYVSTEEKNSTSQNRFVTLTLTHSSKLNLPFEFMKRNGIKKAGKITMVDRYDAKWRTSLLMDKIGTMSLGRGSKGFCEVNGVEMNESFILELIWEDTVPLLKFCSKV.

4 DNA-binding regions (TF-B3) span residues 11–103, 150–247, 276–372, and 460–554; these read NPQF…LGPS, CFVA…FPMT, SFVA…LPLN, and SQNR…FCSK.

It is found in the nucleus. The sequence is that of B3 domain-containing protein REM10 (REM10) from Arabidopsis thaliana (Mouse-ear cress).